A 597-amino-acid polypeptide reads, in one-letter code: Cell division cycle protein 23 homolog (597 aa).

Position 2 is an N-acetylalanine (Ala2). 3 TPR repeats span residues 27-63, 73-112, and 114-144; these read SDLREIKKQLLLIAGLTRERGLLHSSKWSAELAFSLP, PPPITEEDAQDMDAYTLAKAYFDVKEYDRAAHFLHGCNSK, and AYFLYMYSRYLSGEKKKDDETVDSLGPLEKG. Residue Lys147 forms a Glycyl lysine isopeptide (Lys-Gly) (interchain with G-Cter in SUMO2) linkage. TPR repeat units follow at residues 169 to 200, 229 to 259, 263 to 293, 297 to 327, 331 to 361, 366 to 395, 400 to 432, and 433 to 466; these read GFGLYLYGVVLRKLDLVKEAIDVFVEATHVLP, MKEFFLAHIYTELQLIEEALQKYQNLIDVGF, SYIVSQIAVAYHNIRDIDKALSIFNELRKQD, IENMDTFSNLLYVRSMKSELSYLAHNLCEID, VETCCVIGNYYSLRSQHEKAALYFQRALKLN, GAWTLMGHEYMEMKNTSAAIQAYRHAIEVN, RAWYGLGQTYEILKMPFYCLYYYRRAHQLRPND, and SRMLVALGECYEKLNQLVEAKKCYWRAYAVGDVE. A Phosphotyrosine modification is found at Tyr273. Lys467 is modified (N6-acetyllysine). TPR repeat units lie at residues 468–500 and 504–540; these read MALVKLAKLHEQLTESEQAAQCYIKYIQDIYSC and VEHLEESTAFRYLAQYYFKCKLWDEASTCAQKCCAFN. Residues Thr562 and Thr565 each carry the phosphothreonine modification. The residue at position 578 (Ser578) is a Phosphoserine. Thr582 carries the post-translational modification Phosphothreonine. Ser588 and Ser593 each carry phosphoserine. A Phosphothreonine modification is found at Thr596.

This sequence belongs to the APC8/CDC23 family. In terms of assembly, the mammalian APC/C is composed at least of 14 distinct subunits ANAPC1, ANAPC2, CDC27/APC3, ANAPC4, ANAPC5, CDC16/APC6, ANAPC7, CDC23/APC8, ANAPC10, ANAPC11, CDC26/APC12, ANAPC13, ANAPC15 and ANAPC16 that assemble into a complex of at least 19 chains with a combined molecular mass of around 1.2 MDa; APC/C interacts with FZR1 and FBXO5. Interacts with FBXO43; the interaction is direct. In terms of processing, phosphorylated. Phosphorylation on Thr-562 occurs specifically during mitosis.

It functions in the pathway protein modification; protein ubiquitination. Component of the anaphase promoting complex/cyclosome (APC/C), a cell cycle-regulated E3 ubiquitin ligase that controls progression through mitosis and the G1 phase of the cell cycle. The APC/C complex acts by mediating ubiquitination and subsequent degradation of target proteins: it mainly mediates the formation of 'Lys-11'-linked polyubiquitin chains and, to a lower extent, the formation of 'Lys-48'- and 'Lys-63'-linked polyubiquitin chains. The APC/C complex catalyzes assembly of branched 'Lys-11'-/'Lys-48'-linked branched ubiquitin chains on target proteins. The chain is Cell division cycle protein 23 homolog (CDC23) from Homo sapiens (Human).